Reading from the N-terminus, the 198-residue chain is KHSLPDLPYDYGALEPHINAQIMQLHHSKHHAAYVNNLNDTEEKYKEALAKGDVTAQIALQPALKFNGGGHINHSIFWTNLSPNGGGEPKGELLEAIKRDFGSFDKFKERLTAASVGVQGSGWGWLGFNKERGHLQIAACPNQDPLQGTTGLIPLLGIDVWEHAYYLQYKNVRPDYLKAIWNVINWENVTERYMACKK.

Residue histidine 26 participates in Mn(2+) binding. Tyrosine 34 carries the post-translational modification 3'-nitrotyrosine. Residues lysine 44 and lysine 51 each carry the N6-acetyllysine; alternate modification. 2 positions are modified to N6-succinyllysine; alternate: lysine 44 and lysine 51. Histidine 74 is a Mn(2+) binding site. Lysine 90 bears the N6-acetyllysine mark. Residues lysine 98 and lysine 106 each carry the N6-acetyllysine; alternate modification. An N6-succinyllysine; alternate mark is found at lysine 98 and lysine 106. The Mn(2+) site is built by aspartate 159 and histidine 163. Lysine 178 bears the N6-acetyllysine mark.

This sequence belongs to the iron/manganese superoxide dismutase family. In terms of assembly, homotetramer. Mn(2+) serves as cofactor. Post-translationally, nitrated under oxidative stress. Nitration coupled with oxidation inhibits the catalytic activity. In terms of processing, acetylation at Lys-98 decreases enzymatic activity. Deacetylated by SIRT3 upon exposure to ionizing radiations or after long fasting. Polyubiquitinated; leading to proteasomal degradation. Deubiquitinated by USP36 which increases protein stability.

It localises to the mitochondrion matrix. The catalysed reaction is 2 superoxide + 2 H(+) = H2O2 + O2. In terms of biological role, destroys superoxide anion radicals which are normally produced within the cells and which are toxic to biological systems. This chain is Superoxide dismutase [Mn], mitochondrial (SOD2), found in Callithrix jacchus (White-tufted-ear marmoset).